The sequence spans 650 residues: Acetyl-coenzyme A synthetase (650 aa).

CoA contacts are provided by residues 191–194 (RGGR), Thr311, and Asn335. ATP is bound by residues 387–389 (GEP), 411–416 (DTWWQT), Asp500, and Arg515. Ser523 contacts CoA. Arg526 is an ATP binding site. Positions 537, 539, and 542 each coordinate Mg(2+). Residue Arg584 participates in CoA binding. Lys609 bears the N6-acetyllysine mark.

It belongs to the ATP-dependent AMP-binding enzyme family. Mg(2+) serves as cofactor. Acetylated. Deacetylation by the SIR2-homolog deacetylase activates the enzyme.

The catalysed reaction is acetate + ATP + CoA = acetyl-CoA + AMP + diphosphate. In terms of biological role, catalyzes the conversion of acetate into acetyl-CoA (AcCoA), an essential intermediate at the junction of anabolic and catabolic pathways. AcsA undergoes a two-step reaction. In the first half reaction, AcsA combines acetate with ATP to form acetyl-adenylate (AcAMP) intermediate. In the second half reaction, it can then transfer the acetyl group from AcAMP to the sulfhydryl group of CoA, forming the product AcCoA. In Shewanella frigidimarina (strain NCIMB 400), this protein is Acetyl-coenzyme A synthetase.